A 249-amino-acid polypeptide reads, in one-letter code: Methylthioribulose-1-phosphate dehydratase (249 aa).

C102 contacts substrate. Residues H120 and H122 each contribute to the Zn(2+) site. E148 serves as the catalytic Proton donor/acceptor. Residue H205 participates in Zn(2+) binding.

It belongs to the aldolase class II family. MtnB subfamily. Requires Zn(2+) as cofactor.

It is found in the cytoplasm. The enzyme catalyses 5-(methylsulfanyl)-D-ribulose 1-phosphate = 5-methylsulfanyl-2,3-dioxopentyl phosphate + H2O. It participates in amino-acid biosynthesis; L-methionine biosynthesis via salvage pathway; L-methionine from S-methyl-5-thio-alpha-D-ribose 1-phosphate: step 2/6. Its function is as follows. Catalyzes the dehydration of methylthioribulose-1-phosphate (MTRu-1-P) into 2,3-diketo-5-methylthiopentyl-1-phosphate (DK-MTP-1-P). This is Methylthioribulose-1-phosphate dehydratase from Botryotinia fuckeliana (strain B05.10) (Noble rot fungus).